Here is a 709-residue protein sequence, read N- to C-terminus: RxLR effector protein PITG_15110 (709 aa).

Residues 1–18 (MHAYSAAVLMGLLMVAEG) form the signal peptide. The RxLR-dEER motif lies at 51–66 (RLLREPETTEASNEDR).

This sequence belongs to the RxLR effector family.

Its subcellular location is the secreted. It is found in the host cytoplasm. The protein resides in the host cytoskeleton. Effector that enhances P.infestans colonization of Nicotiana benthamiana leaves. The polypeptide is RxLR effector protein PITG_15110 (Phytophthora infestans (strain T30-4) (Potato late blight agent)).